The chain runs to 444 residues: Glutamate-1-semialdehyde 2,1-aminomutase (444 aa).

Residue lysine 267 is modified to N6-(pyridoxal phosphate)lysine.

Belongs to the class-III pyridoxal-phosphate-dependent aminotransferase family. HemL subfamily. As to quaternary structure, homodimer. Pyridoxal 5'-phosphate serves as cofactor.

Its subcellular location is the cytoplasm. The enzyme catalyses (S)-4-amino-5-oxopentanoate = 5-aminolevulinate. The protein operates within porphyrin-containing compound metabolism; protoporphyrin-IX biosynthesis; 5-aminolevulinate from L-glutamyl-tRNA(Glu): step 2/2. This is Glutamate-1-semialdehyde 2,1-aminomutase from Xylella fastidiosa (strain M12).